A 792-amino-acid polypeptide reads, in one-letter code: Ribonucleoside-diphosphate reductase large subunit (792 aa).

The ATP-cone domain maps to 1–92 (MHVIKRDGRQ…VSNLHKETKK (92 aa)). ATP contacts are provided by residues 5–6 (KR), 11–17 (ERVMFDK), Thr-53, and Asp-57. Lys-17 is modified (N6-acetyllysine). Ser-202 and Ser-217 together coordinate GDP. Cys-218 and Cys-444 are oxidised to a cystine. DTTP-binding positions include 226 to 228 (DSI), Lys-243, Arg-256, and 263 to 264 (AG). N6-acetyllysine is present on Lys-376. Asn-427 is a binding site for GDP. The active-site Proton acceptor is Asn-427. The Cysteine radical intermediate role is filled by Cys-429. Residues Glu-431 and 604 to 607 (TAST) each bind GDP. The active-site Proton acceptor is Glu-431. The residue at position 751 (Thr-751) is a Phosphothreonine.

Belongs to the ribonucleoside diphosphate reductase large chain family. In terms of assembly, heterodimer of a large and a small subunit. Heterodimer with small subunit RRM2 or RRM2B. The heterodimer with RRM2 has higher catalytic activity than the heterodimer with RRM2B. Interacts with AHCYL1 which inhibits its activity.

It localises to the cytoplasm. It carries out the reaction a 2'-deoxyribonucleoside 5'-diphosphate + [thioredoxin]-disulfide + H2O = a ribonucleoside 5'-diphosphate + [thioredoxin]-dithiol. With respect to regulation, under complex allosteric control mediated by deoxynucleoside triphosphates and ATP binding to separate specificity and activation sites on the M1 subunit. The type of nucleotide bound at the specificity site determines substrate preference. It seems probable that ATP makes the enzyme reduce CDP and UDP, dGTP favors ADP reduction and dTTP favors GDP reduction. Stimulated by ATP and inhibited by dATP binding to the activity site, the dATP inhibition is mediated by AHCYL1 which stabilizes dATP in the site. Functionally, provides the precursors necessary for DNA synthesis. Catalyzes the biosynthesis of deoxyribonucleotides from the corresponding ribonucleotides. This Homo sapiens (Human) protein is Ribonucleoside-diphosphate reductase large subunit (RRM1).